A 164-amino-acid chain; its full sequence is Photosystem II extrinsic protein V (164 aa).

The N-terminal stretch at M1–S27 is a signal peptide. Heme c-binding residues include C64, C67, H68, and H119.

It belongs to the cytochrome c family. PsbV subfamily. PSII is composed of 1 copy each of membrane proteins PsbA, PsbB, PsbC, PsbD, PsbE, PsbF, PsbH, PsbI, PsbJ, PsbK, PsbL, PsbM, PsbT, PsbY, PsbZ, Psb30/Ycf12, at least 3 peripheral proteins of the oxygen-evolving complex and a large number of cofactors. It forms dimeric complexes. The extrinsic subunits in red algae are PsbO (OEC33), PsbQ', cytochrome c-550 and PsbU. Requires heme c as cofactor.

It localises to the plastid. It is found in the chloroplast thylakoid membrane. One of the extrinsic, lumenal subunits of photosystem II (PSII). PSII is a light-driven water plastoquinone oxidoreductase, using light energy to abstract electrons from H(2)O, generating a proton gradient subsequently used for ATP formation. The extrinsic proteins stabilize the structure of photosystem II oxygen-evolving complex (OEC), the ion environment of oxygen evolution and protect the OEC against heat-induced inactivation. The sequence is that of Photosystem II extrinsic protein V from Cyanidium caldarium (Red alga).